The chain runs to 465 residues: MARTMAEKVWEEHVVRRAEGEPDLLYIDLHLIHEVTSPQAFEGLRLANRKLRRPDLTIATEDHNVPTENIFLPIADPVSRTQVETLRKNAAEFGVRLHPMGDIDQGIVHVIGPQLGLTQPGMTIVCGDSHTSTHGAFGALAFGIGTSQVEHVMATQTLPMTPFKTMAVNVEGKLKPGVTAKDIILAVIAQIGTGGGQGHVIEYRGEAIRSLSMEARMTICNMSIEAGARAGMIAPDQTTFDYLKGRPHAPKGELWDQAVEYWKTLPTDEGAVFDKEVFLNADELSPFVTWGTNPGQGVPLDSVVPDPESFTDPVERAAAEKALAYMDLKPGTRMRDIKIDTVFLGSCTNGRIEDLRAAAEVLKGRKVADGVRMLVVPGSQRVKQQAAAEGLDEIFKAAGAEWREAGCSMCLGMNPDTLKPGERSASTSNRNFEGRQGKGGRTHLVSPLVAAATAVRGTLSSPADL.

Residues Cys-347, Cys-407, and Cys-410 each contribute to the [4Fe-4S] cluster site. The disordered stretch occupies residues 417-443; that stretch reads TLKPGERSASTSNRNFEGRQGKGGRTH.

This sequence belongs to the aconitase/IPM isomerase family. LeuC type 1 subfamily. Heterodimer of LeuC and LeuD. [4Fe-4S] cluster is required as a cofactor.

The enzyme catalyses (2R,3S)-3-isopropylmalate = (2S)-2-isopropylmalate. The protein operates within amino-acid biosynthesis; L-leucine biosynthesis; L-leucine from 3-methyl-2-oxobutanoate: step 2/4. Its function is as follows. Catalyzes the isomerization between 2-isopropylmalate and 3-isopropylmalate, via the formation of 2-isopropylmaleate. The chain is 3-isopropylmalate dehydratase large subunit from Thermobifida fusca (strain YX).